The chain runs to 227 residues: Cytochrome c oxidase subunit 2 (227 aa).

The Mitochondrial intermembrane segment spans residues 1–14 (MAYPFQLGFQDAAS). The chain crosses the membrane as a helical span at residues 15–45 (PIMEELLHFHDHTLMIVFLISSLVLYIITLM). Topologically, residues 46–59 (LTTKLTHTSTMDAQ) are mitochondrial matrix. Residues 60-87 (EVETVWTILPAIILILIALPSLRILYMM) traverse the membrane as a helical segment. Residues 88 to 227 (DEVNNPSLTV…VFEKWSVSML (140 aa)) lie on the Mitochondrial intermembrane side of the membrane. Residues His161, Cys196, Glu198, Cys200, His204, and Met207 each coordinate Cu cation. Glu198 serves as a coordination point for Mg(2+).

It belongs to the cytochrome c oxidase subunit 2 family. Component of the cytochrome c oxidase (complex IV, CIV), a multisubunit enzyme composed of 14 subunits. The complex is composed of a catalytic core of 3 subunits MT-CO1, MT-CO2 and MT-CO3, encoded in the mitochondrial DNA, and 11 supernumerary subunits COX4I, COX5A, COX5B, COX6A, COX6B, COX6C, COX7A, COX7B, COX7C, COX8 and NDUFA4, which are encoded in the nuclear genome. The complex exists as a monomer or a dimer and forms supercomplexes (SCs) in the inner mitochondrial membrane with NADH-ubiquinone oxidoreductase (complex I, CI) and ubiquinol-cytochrome c oxidoreductase (cytochrome b-c1 complex, complex III, CIII), resulting in different assemblies (supercomplex SCI(1)III(2)IV(1) and megacomplex MCI(2)III(2)IV(2)). Found in a complex with TMEM177, COA6, COX18, COX20, SCO1 and SCO2. Interacts with TMEM177 in a COX20-dependent manner. Interacts with COX20. Interacts with COX16. It depends on Cu cation as a cofactor.

It is found in the mitochondrion inner membrane. It carries out the reaction 4 Fe(II)-[cytochrome c] + O2 + 8 H(+)(in) = 4 Fe(III)-[cytochrome c] + 2 H2O + 4 H(+)(out). Component of the cytochrome c oxidase, the last enzyme in the mitochondrial electron transport chain which drives oxidative phosphorylation. The respiratory chain contains 3 multisubunit complexes succinate dehydrogenase (complex II, CII), ubiquinol-cytochrome c oxidoreductase (cytochrome b-c1 complex, complex III, CIII) and cytochrome c oxidase (complex IV, CIV), that cooperate to transfer electrons derived from NADH and succinate to molecular oxygen, creating an electrochemical gradient over the inner membrane that drives transmembrane transport and the ATP synthase. Cytochrome c oxidase is the component of the respiratory chain that catalyzes the reduction of oxygen to water. Electrons originating from reduced cytochrome c in the intermembrane space (IMS) are transferred via the dinuclear copper A center (CU(A)) of subunit 2 and heme A of subunit 1 to the active site in subunit 1, a binuclear center (BNC) formed by heme A3 and copper B (CU(B)). The BNC reduces molecular oxygen to 2 water molecules using 4 electrons from cytochrome c in the IMS and 4 protons from the mitochondrial matrix. The polypeptide is Cytochrome c oxidase subunit 2 (MT-CO2) (Balaenoptera physalus (Fin whale)).